Consider the following 477-residue polypeptide: AAA-ATPase At3g28600 (477 aa).

The signal sequence occupies residues 1-26; it reads MMMGNTFGSSLASLFFLWATIQQIFP. 245–252 is a binding site for ATP; sequence GPPGTGKS.

The protein belongs to the AAA ATPase family. BCS1 subfamily. Mg(2+) serves as cofactor.

The enzyme catalyses ATP + H2O = ADP + phosphate + H(+). The protein is AAA-ATPase At3g28600 of Arabidopsis thaliana (Mouse-ear cress).